Reading from the N-terminus, the 137-residue chain is MLSPKRTKFRKMQKGNNRGLAMTGSDVSFGDFALQCVEPARVTSRQIEAARMAIQRHVKRAGKLWIRIFPDRPVTKKPLEVRMGGGKGAPEEWCALVQPGRVMYEISGVSEETAKEAFRLASHKLPMQCKFLARGLT.

The protein belongs to the universal ribosomal protein uL16 family. In terms of assembly, part of the 50S ribosomal subunit.

Its function is as follows. Binds 23S rRNA and is also seen to make contacts with the A and possibly P site tRNAs. The protein is Large ribosomal subunit protein uL16 of Sorangium cellulosum (strain So ce56) (Polyangium cellulosum (strain So ce56)).